The sequence spans 672 residues: DNA ligase (672 aa).

Residues 30-34, 79-80, and glutamate 110 contribute to the NAD(+) site; these read DAVYD and SL. Lysine 112 acts as the N6-AMP-lysine intermediate in catalysis. Arginine 133, glutamate 170, lysine 287, and lysine 311 together coordinate NAD(+). The Zn(2+) site is built by cysteine 405, cysteine 408, cysteine 423, and cysteine 429. Positions 590–672 constitute a BRCT domain; that stretch reads ADELPLSGKT…IALLTEHGAI (83 aa).

Belongs to the NAD-dependent DNA ligase family. LigA subfamily. It depends on Mg(2+) as a cofactor. Mn(2+) serves as cofactor.

The catalysed reaction is NAD(+) + (deoxyribonucleotide)n-3'-hydroxyl + 5'-phospho-(deoxyribonucleotide)m = (deoxyribonucleotide)n+m + AMP + beta-nicotinamide D-nucleotide.. In terms of biological role, DNA ligase that catalyzes the formation of phosphodiester linkages between 5'-phosphoryl and 3'-hydroxyl groups in double-stranded DNA using NAD as a coenzyme and as the energy source for the reaction. It is essential for DNA replication and repair of damaged DNA. The polypeptide is DNA ligase (Marinomonas sp. (strain MWYL1)).